Consider the following 2253-residue polypeptide: Polycystin family receptor for egg jelly (2253 aa).

A signal peptide spans 1–19 (MRPGPALLLLGVGLSLSVG). The Extracellular portion of the chain corresponds to 20–1184 (RLPLPPVPRG…NIIKSLHQNP (1165 aa)). Low complexity predominate over residues 154-169 (RPASPAARVSPRSAAP). Residues 154–177 (RPASPAARVSPRSAAPGPRPQQGF) are disordered. 14 N-linked (GlcNAc...) asparagine glycosylation sites follow: asparagine 197, asparagine 242, asparagine 295, asparagine 306, asparagine 345, asparagine 349, asparagine 481, asparagine 674, asparagine 849, asparagine 890, asparagine 923, asparagine 939, asparagine 958, and asparagine 965. An REJ domain is found at 215–913 (CVIQRVRINT…STMFCDFTND (699 aa)). A helical membrane pass occupies residues 1185–1205 (VTLFTVLFIILLYVGLAFWAL). Residues 1206-1389 (YRDEMDQHLR…VAKTFNRLQR (184 aa)) lie on the Cytoplasmic side of the membrane. The region spanning 1230–1347 (LCYLVTIFTG…TLDRTFHVTH (118 aa)) is the PLAT domain. The helical transmembrane segment at 1390-1410 (LSCCLAMLLSSLLCNIMFFNL) threads the bilayer. At 1411–1427 (NRQEQTESRERKYMRSM) the chain is on the extracellular side. A helical transmembrane segment spans residues 1428–1448 (MIGIESVLITIPVQLLITFLF). The Cytoplasmic portion of the chain corresponds to 1449–1576 (TCSQRKPQAD…KPRIVLPWWC (128 aa)). The disordered stretch occupies residues 1494–1562 (PREVAKPASK…EQHPSQKDLQ (69 aa)). Positions 1517–1527 (SKPKHRHRKAQ) are enriched in basic residues. Positions 1549 to 1558 (DVHSEQHPSQ) are enriched in basic and acidic residues. The chain crosses the membrane as a helical span at residues 1577-1597 (VYVAWFLVFATSSISSFFIVF). Residues 1598 to 1607 (YGLTYGYDKS) are Extracellular-facing. The helical transmembrane segment at 1608-1628 (IEWLFASFCSFCQSVLLVQPS) threads the bilayer. Over 1629 to 1708 (KIILLSGFRT…RKKRIKRRAL (80 aa)) the chain is Cytoplasmic. Residues 1709–1729 (LFLSYILTHFIFLALLLILIV) traverse the membrane as a helical segment. Residues 1730-1966 (LLRHTDCFYY…FDRKASAEIY (237 aa)) are Extracellular-facing. N-linked (GlcNAc...) asparagine glycans are attached at residues asparagine 1836, asparagine 1893, and asparagine 1944. Residues 1967–1987 (LYVAILIFFLAYVVDEGCIIM) form a helical membrane-spanning segment. Residues 1988–1996 (QERASYVRS) are Cytoplasmic-facing. The chain crosses the membrane as a helical span at residues 1997-2017 (VYNLLNFALKCIFTVLIVLFL). The Extracellular portion of the chain corresponds to 2018-2042 (RKHFLATGIIRFYLSNPEDFIPFHA). The chain crosses the membrane as a helical span at residues 2043–2063 (VSQVDHIMRIILGFLLFLTIL). Residues 2064 to 2091 (KTLRYSRFFYDVRLAQRAIQAALPGICH) are Cytoplasmic-facing. The helical transmembrane segment at 2092–2112 (MAFVVSVYFFVYMAFGYLVFG) threads the bilayer. Residues 2113–2145 (QHEWNYSNLIHSTQTVFSYCVSAFQNTEFSNNR) are Extracellular-facing. A helical transmembrane segment spans residues 2146 to 2166 (ILGVLFLSSFMLVMICVLINL). The Cytoplasmic segment spans residues 2167–2253 (FQAVILSAYE…NGKKMVYLVV (87 aa)).

It belongs to the polycystin family. As to expression, exclusively expressed in testis.

Its subcellular location is the cell membrane. The protein resides in the cytoplasmic vesicle. It localises to the secretory vesicle. It is found in the acrosome membrane. The protein localises to the nucleus. Its function is as follows. Testis-specific protein that controls sperm transport and the timing of zona pellucida-evoked exocytosis of the sperm acrosome. This is Polycystin family receptor for egg jelly from Homo sapiens (Human).